A 493-amino-acid chain; its full sequence is Alcohol-forming fatty acyl-CoA reductase (493 aa).

Belongs to the fatty acyl-CoA reductase family.

It catalyses the reaction a long-chain fatty acyl-CoA + 2 NADPH + 2 H(+) = a long-chain primary fatty alcohol + 2 NADP(+) + CoA. Functionally, NADPH-dependent alcohol-forming fatty acyl-coenzyme A reductase that catalyzes the reduction of fatty acyl-CoA to fatty alcohols. The recombinant enzyme accepts saturated and mono-unsaturated fatty acyl-CoAs of 16 to 22 carbons. The chain is Alcohol-forming fatty acyl-CoA reductase from Simmondsia chinensis (Jojoba).